We begin with the raw amino-acid sequence, 141 residues long: Hemoglobin subunit alpha (141 aa).

Residues 1–141 (VLSSKDKTNV…VSTVLTSKYR (141 aa)) form the Globin domain. The residue at position 3 (S3) is a Phosphoserine. At K7 the chain carries N6-succinyllysine. A Phosphothreonine modification is found at T8. K11 carries the post-translational modification N6-succinyllysine. K16 is subject to N6-acetyllysine; alternate. K16 carries the N6-succinyllysine; alternate modification. At Y24 the chain carries Phosphotyrosine. K40 is subject to N6-succinyllysine. S49 carries the phosphoserine modification. H58 is a binding site for O2. H87 contacts heme b. At S102 the chain carries Phosphoserine. T108 carries the phosphothreonine modification. S124 carries the post-translational modification Phosphoserine. Residues T134 and T137 each carry the phosphothreonine modification. At S138 the chain carries Phosphoserine.

It belongs to the globin family. In terms of assembly, heterotetramer of two alpha chains and two beta chains. In terms of tissue distribution, red blood cells.

Its function is as follows. Involved in oxygen transport from the lung to the various peripheral tissues. Functionally, hemopressin acts as an antagonist peptide of the cannabinoid receptor CNR1. Hemopressin-binding efficiently blocks cannabinoid receptor CNR1 and subsequent signaling. In Camelus dromedarius (Dromedary), this protein is Hemoglobin subunit alpha (HBA).